The following is a 172-amino-acid chain: Macro domain-containing protein CT2219 (172 aa).

One can recognise a Macro domain in the interval 1–172; sequence MPDNVLIHAI…DVYQKALAAG (172 aa).

This sequence belongs to the MacroD-type family.

This is Macro domain-containing protein CT2219 from Chlorobaculum tepidum (strain ATCC 49652 / DSM 12025 / NBRC 103806 / TLS) (Chlorobium tepidum).